A 232-amino-acid polypeptide reads, in one-letter code: Proteasome subunit alpha (232 aa).

This sequence belongs to the peptidase T1A family. In terms of assembly, the 20S proteasome core is composed of 14 alpha and 14 beta subunits that assemble into four stacked heptameric rings, resulting in a barrel-shaped structure. The two inner rings, each composed of seven catalytic beta subunits, are sandwiched by two outer rings, each composed of seven alpha subunits. The catalytic chamber with the active sites is on the inside of the barrel. Has a gated structure, the ends of the cylinder being occluded by the N-termini of the alpha-subunits. Is capped by the proteasome-associated ATPase, ARC.

The protein resides in the cytoplasm. Its pathway is protein degradation; proteasomal Pup-dependent pathway. With respect to regulation, the formation of the proteasomal ATPase ARC-20S proteasome complex, likely via the docking of the C-termini of ARC into the intersubunit pockets in the alpha-rings, may trigger opening of the gate for substrate entry. Interconversion between the open-gate and close-gate conformations leads to a dynamic regulation of the 20S proteasome proteolysis activity. In terms of biological role, component of the proteasome core, a large protease complex with broad specificity involved in protein degradation. The sequence is that of Proteasome subunit alpha from Acidimicrobium ferrooxidans (strain DSM 10331 / JCM 15462 / NBRC 103882 / ICP).